Reading from the N-terminus, the 843-residue chain is Elongation factor 2 (843 aa).

The region spanning 17-344 is the tr-type G domain; it reads HNIRNMSVIA…MMIFHLPSPH (328 aa). Residues 26 to 33 and 158 to 161 each bind GTP; these read AHVDHGKS and NKMD. H700 carries the diphthamide modification. Residue S837 is modified to Phosphoserine.

Belongs to the TRAFAC class translation factor GTPase superfamily. Classic translation factor GTPase family. May interact with glutaredoxins (Grxs). As to expression, expressed in root, stem, leaves, flowers and siliques.

It localises to the cytoplasm. The catalysed reaction is GTP + H2O = GDP + phosphate + H(+). It participates in protein biosynthesis; polypeptide chain elongation. Its function is as follows. Catalyzes the GTP-dependent ribosomal translocation step during translation elongation. During this step, the ribosome changes from the pre-translocational (PRE) to the post-translocational (POST) state as the newly formed A-site-bound peptidyl-tRNA and P-site-bound deacylated tRNA move to the P and E sites, respectively. Catalyzes the coordinated movement of the two tRNA molecules, the mRNA and conformational changes in the ribosome. Involved in cold responses leading to freezing tolerance via the induction of cold-responsive genes. The protein is Elongation factor 2 of Arabidopsis thaliana (Mouse-ear cress).